A 397-amino-acid polypeptide reads, in one-letter code: Plasma membrane iron permease (397 aa).

Transmembrane regions (helical) follow at residues 61–81 (FTAL…FYAL), 92–112 (IWEG…GFAM), 177–197 (AFPL…YFIY), and 292–312 (GSIL…FLMW). Phosphoserine occurs at positions 337 and 338. The segment covering 337-346 (SSHTPVQSSS) has biased composition (polar residues). The interval 337-364 (SSHTPVQSSSSEDEFKINSPTDDKGDKA) is disordered. Threonine 340 is subject to Phosphothreonine. A phosphoserine mark is found at serine 346, serine 347, and serine 355. The span at 349–364 (DEFKINSPTDDKGDKA) shows a compositional bias: basic and acidic residues. The residue at position 357 (threonine 357) is a Phosphothreonine. Phosphoserine occurs at positions 374, 375, and 376.

This sequence belongs to the oxidase-dependent Fe transporter (OFeT) (TC 9.A.10.1) family.

The protein resides in the membrane. Permease for high affinity iron uptake. The polypeptide is Plasma membrane iron permease (fip1) (Schizosaccharomyces pombe (strain 972 / ATCC 24843) (Fission yeast)).